The chain runs to 89 residues: Small ribosomal subunit protein uS17 (89 aa).

Belongs to the universal ribosomal protein uS17 family. Part of the 30S ribosomal subunit.

Functionally, one of the primary rRNA binding proteins, it binds specifically to the 5'-end of 16S ribosomal RNA. The chain is Small ribosomal subunit protein uS17 from Xylella fastidiosa (strain Temecula1 / ATCC 700964).